A 354-amino-acid polypeptide reads, in one-letter code: DnaJ homolog shv (354 aa).

The N-terminal stretch at 1 to 22 (MQLIKCLVIIQLSLLLVEESFA) is a signal peptide. One can recognise a J domain in the interval 25-90 (DFYKILNVKK…DKRKTYDRCG (66 aa)). N-linked (GlcNAc...) asparagine glycans are attached at residues asparagine 260 and asparagine 312.

In the testes, detected at low levels in somatic hub cells, cyst stem cells and the apical tip (at protein level). Levels in the testes decrease with age (at protein level). Expressed at low levels in hub cells, cyst stem cells and germline stem cells, and at high levels in spermatocytes and cyst cells.

The protein resides in the nucleus. It localises to the cell membrane. The protein localises to the secreted. Its function is as follows. Maintains stem cell niche architecture in the testes. Activates an extracellular integrin beta-PS pathway which regulates DE-cadherin (shg) levels in somatic hub cells, and is essential for maintaining the number of germline stem cells and the structure and localization of hub cells. This Drosophila melanogaster (Fruit fly) protein is DnaJ homolog shv.